Here is a 266-residue protein sequence, read N- to C-terminus: tRNA pseudouridine synthase A (266 aa).

Catalysis depends on Asp-53, which acts as the Nucleophile. Tyr-109 provides a ligand contact to substrate.

The protein belongs to the tRNA pseudouridine synthase TruA family.

The enzyme catalyses uridine(38/39/40) in tRNA = pseudouridine(38/39/40) in tRNA. In terms of biological role, formation of pseudouridine at positions 38, 39 and 40 in the anticodon stem and loop of transfer RNAs. The protein is tRNA pseudouridine synthase A of Methanocella arvoryzae (strain DSM 22066 / NBRC 105507 / MRE50).